The chain runs to 262 residues: 14-3-3-like protein B (262 aa).

This sequence belongs to the 14-3-3 family.

This Hordeum vulgare (Barley) protein is 14-3-3-like protein B.